The chain runs to 844 residues: Proto-oncogene vav (844 aa).

In terms of domain architecture, Calponin-homology (CH) spans 1–119 (MELWRQCTHW…YTLSALSWTP (119 aa)). The DH domain maps to 193 to 372 (KRCCCLREIQ…RDLAQCVNEV (180 aa)). The 103-residue stretch at 401–503 (RPKIDGELKI…WMEQFEMAIS (103 aa)) folds into the PH domain. The Phorbol-ester/DAG-type zinc-finger motif lies at 514–563 (GHDFQMFSFEETTSCKACQMLLRGTFYQGYRCQRCRAPAHKECLGRVPPC). The disordered stretch occupies residues 567–589 (GQDYSGTMKKDKPHRRAQDKKRN). The region spanning 591 to 659 (LGLPKMEVCQ…PCNRVKPYVH (69 aa)) is the SH3 1 domain. Positions 670–764 (WYAGPMERAG…SLDTTLQFPF (95 aa)) constitute an SH2 domain. The 61-residue stretch at 781–841 (KIFGTAKARY…PSNYVEEDYS (61 aa)) folds into the SH3 2 domain. Y825 and Y843 each carry phosphotyrosine.

As to quaternary structure, interacts with SHB. Interacts with APS, DOCK2, GRB2, GRB3, DOCK2, SLA, TEC and ZNF655/VIK. Interacts with SIAH2; without leading to its degradation. Associates with BLNK, PLCG1, GRB2 and NCK1 in a B-cell antigen receptor-dependent fashion. Interacts with CBLB; which inhibits tyrosine phosphorylation and down-regulates activity. May interact with CCPG1. Interacts with CLNK. Interacts with THEMIS2. Interacts with NEK3 and this interaction is prolactin-dependent. Interacts with ITK. Interacts with PTK2B/PYK2. Interacts with HCK. Interacts with PTK2B/PYK2. Interacts (via SH2 domain) with SYK. Interacts with ANKRD54. Interacts with CD6. Interacts with LCP2; this interaction plays a role in TCR-mediated cytokine production. Phosphorylated by FYN. Phosphorylated on tyrosine residues by HCK in response to IFNG and bacterial lipopolysaccharide (LPS).

Couples tyrosine kinase signals with the activation of the Rho/Rac GTPases, thus leading to cell differentiation and/or proliferation. The chain is Proto-oncogene vav (VAV1) from Bos taurus (Bovine).